A 367-amino-acid chain; its full sequence is Heat-inducible transcription repressor HrcA (367 aa).

Belongs to the HrcA family.

Its function is as follows. Negative regulator of class I heat shock genes (grpE-dnaK-dnaJ and groELS operons). Prevents heat-shock induction of these operons. This is Heat-inducible transcription repressor HrcA from Acaryochloris marina (strain MBIC 11017).